Consider the following 213-residue polypeptide: Chloramphenicol acetyltransferase 3 (213 aa).

The active-site Proton acceptor is the histidine 189.

The protein belongs to the chloramphenicol acetyltransferase family. Homotrimer.

The catalysed reaction is chloramphenicol + acetyl-CoA = chloramphenicol 3-acetate + CoA. Its function is as follows. This enzyme is an effector of chloramphenicol resistance in bacteria. This is Chloramphenicol acetyltransferase 3 (cat3) from Escherichia coli.